We begin with the raw amino-acid sequence, 120 residues long: Large ribosomal subunit protein uL22 (120 aa).

This sequence belongs to the universal ribosomal protein uL22 family. In terms of assembly, part of the 50S ribosomal subunit.

This protein binds specifically to 23S rRNA; its binding is stimulated by other ribosomal proteins, e.g. L4, L17, and L20. It is important during the early stages of 50S assembly. It makes multiple contacts with different domains of the 23S rRNA in the assembled 50S subunit and ribosome. In terms of biological role, the globular domain of the protein is located near the polypeptide exit tunnel on the outside of the subunit, while an extended beta-hairpin is found that lines the wall of the exit tunnel in the center of the 70S ribosome. This chain is Large ribosomal subunit protein uL22, found in Corynebacterium aurimucosum (strain ATCC 700975 / DSM 44827 / CIP 107346 / CN-1) (Corynebacterium nigricans).